Here is a 165-residue protein sequence, read N- to C-terminus: Lipoprotein signal peptidase (165 aa).

The next 3 membrane-spanning stretches (helical) occupy residues 12-32, 70-90, and 102-122; these read WLWL…LILQ, WFFA…MYRA, and ALII…GFVV. Residues Asp123 and Asp141 contribute to the active site. The helical transmembrane segment at 137-157 threads the bilayer; the sequence is FNLADTAICIGAALVVLEGFL.

The protein belongs to the peptidase A8 family.

The protein localises to the cell inner membrane. It catalyses the reaction Release of signal peptides from bacterial membrane prolipoproteins. Hydrolyzes -Xaa-Yaa-Zaa-|-(S,diacylglyceryl)Cys-, in which Xaa is hydrophobic (preferably Leu), and Yaa (Ala or Ser) and Zaa (Gly or Ala) have small, neutral side chains.. It participates in protein modification; lipoprotein biosynthesis (signal peptide cleavage). This protein specifically catalyzes the removal of signal peptides from prolipoproteins. The protein is Lipoprotein signal peptidase of Cronobacter sakazakii (strain ATCC BAA-894) (Enterobacter sakazakii).